Reading from the N-terminus, the 359-residue chain is Alkanal monooxygenase alpha chain (359 aa).

This sequence belongs to the bacterial luciferase oxidoreductase family. In terms of assembly, heterodimer of an alpha and a beta chain.

It catalyses the reaction a long-chain fatty aldehyde + FMNH2 + O2 = a long-chain fatty acid + hnu + FMN + H2O + 2 H(+). Light-emitting reaction in luminous bacteria. The polypeptide is Alkanal monooxygenase alpha chain (luxA) (Photorhabdus laumondii subsp. laumondii (strain DSM 15139 / CIP 105565 / TT01) (Photorhabdus luminescens subsp. laumondii)).